The chain runs to 487 residues: Malonate-semialdehyde dehydrogenase 2 (487 aa).

The NAD(+) site is built by Phe154, Lys178, Glu181, Arg182, and Ser231. Residue Cys286 is the Nucleophile of the active site. Residue Glu386 coordinates NAD(+).

Belongs to the aldehyde dehydrogenase family. IolA subfamily. Homotetramer.

It catalyses the reaction 3-oxopropanoate + NAD(+) + CoA + H2O = hydrogencarbonate + acetyl-CoA + NADH + H(+). The enzyme catalyses 2-methyl-3-oxopropanoate + NAD(+) + CoA + H2O = propanoyl-CoA + hydrogencarbonate + NADH + H(+). Its pathway is polyol metabolism; myo-inositol degradation into acetyl-CoA; acetyl-CoA from myo-inositol: step 7/7. In terms of biological role, catalyzes the oxidation of malonate semialdehyde (MSA) and methylmalonate semialdehyde (MMSA) into acetyl-CoA and propanoyl-CoA, respectively. Is involved in a myo-inositol catabolic pathway. Bicarbonate, and not CO2, is the end-product of the enzymatic reaction. This Bacillus thuringiensis subsp. konkukian (strain 97-27) protein is Malonate-semialdehyde dehydrogenase 2.